The sequence spans 198 residues: Large ribosomal subunit protein bL25 (198 aa).

It belongs to the bacterial ribosomal protein bL25 family. CTC subfamily. In terms of assembly, part of the 50S ribosomal subunit; part of the 5S rRNA/L5/L18/L25 subcomplex. Contacts the 5S rRNA. Binds to the 5S rRNA independently of L5 and L18.

This is one of the proteins that binds to the 5S RNA in the ribosome where it forms part of the central protuberance. The chain is Large ribosomal subunit protein bL25 from Lysinibacillus sphaericus (strain C3-41).